The following is a 125-amino-acid chain: Fluoride-specific ion channel FluC (125 aa).

Helical transmembrane passes span 1–21 (MIQAILVAFGGAIGSVLRYYV), 32–52 (AFPWGTLAVNVVGCFVIGVFA), 68–88 (LLITGFLGGFTTFSAFSLDAI), and 101–121 (IYIAASVGLSMAAVIAGLAVM). Na(+)-binding residues include Gly-75 and Thr-78.

It belongs to the fluoride channel Fluc/FEX (TC 1.A.43) family.

It localises to the cell inner membrane. It catalyses the reaction fluoride(in) = fluoride(out). With respect to regulation, na(+) is not transported, but it plays an essential structural role and its presence is essential for fluoride channel function. Functionally, fluoride-specific ion channel. Important for reducing fluoride concentration in the cell, thus reducing its toxicity. The chain is Fluoride-specific ion channel FluC from Rhizobium johnstonii (strain DSM 114642 / LMG 32736 / 3841) (Rhizobium leguminosarum bv. viciae).